We begin with the raw amino-acid sequence, 172 residues long: C-phycocyanin beta chain (172 aa).

N72 bears the N4-methylasparagine mark. (2R,3E)-phycocyanobilin is bound by residues C82 and C153.

It belongs to the phycobiliprotein family. Heterodimer of an alpha and a beta subunit, which further assembles into trimers and the trimers into hexamers. The basic functional unit of phycobiliproteins is a ring-shaped hexamer formed from two back-to-back trimers contacting via the alpha chain subunits. The trimers are composed of alpha/beta subunit heterodimers arranged around a three-fold axis of symmetry. The phycoerythrins also contain a gamma subunit which is located in the center of the hexamer. Post-translationally, contains two covalently linked bilin chromophores.

The protein localises to the plastid. It is found in the chloroplast thylakoid membrane. Light-harvesting photosynthetic bile pigment-protein from the phycobiliprotein complex (phycobilisome, PBS). Phycocyanin is the major phycobiliprotein in the PBS rod. The chain is C-phycocyanin beta chain (cpcB) from Rhodella violacea (Red alga).